Here is a 730-residue protein sequence, read N- to C-terminus: Rap1 GTPase-activating protein 2 (730 aa).

A Rap-GAP domain is found at 247–463 (IVAYDEHEVN…RTRAALLDNL (217 aa)). Disordered stretches follow at residues 510–668 (MVGS…STAS) and 698–730 (SRSPTDIKNRNSPRSNLKFRFDKLSHGSSSTSH). Composition is skewed to polar residues over residues 535-557 (GEVTKTTFSPPVSAATAKNQSRS) and 597-612 (HSSQEMKSETSSNPSS). The segment covering 617 to 630 (PNKDRPFVKLKENG) has biased composition (basic and acidic residues). A compositionally biased stretch (low complexity) spans 631-651 (RSNISRSSSSTSSFSSTAGES). A compositionally biased stretch (polar residues) spans 699–712 (RSPTDIKNRNSPRS).

The protein resides in the cytoplasm. Functionally, GTPase activator for the nuclear Ras-related regulatory protein RAP-1A (KREV-1), converting it to the putatively inactive GDP-bound state. This chain is Rap1 GTPase-activating protein 2 (RAP1GAP2), found in Gallus gallus (Chicken).